The following is a 508-amino-acid chain: Protein S-acyltransferase 18 (508 aa).

A run of 2 helical transmembrane segments spans residues 17-37 (IVGAVIYSVLVAAFYVFLGFF) and 42-62 (IAVIALLSVFSSVAVSVIVLF). A DHHC domain is found at 158 to 208 (SYCSLCDLEVKRSSKHCRTCNRCVEGFDHHCRWLNNCVGKKNYTTFILLMV). Cys-188 functions as the S-palmitoyl cysteine intermediate in the catalytic mechanism. The next 2 helical transmembrane spans lie at 203-223 (FILLMVFVLLMLIIEGGTALA) and 250-270 (WALATISIILVLFTAYGSAAM). Residues 443-468 (VSPGRFSSPRRRFSGSSSSTVPSPKQ) are disordered. Positions 456 to 466 (SGSSSSTVPSP) are enriched in low complexity.

Belongs to the DHHC palmitoyltransferase family.

Its subcellular location is the endoplasmic reticulum membrane. It localises to the cytoplasmic vesicle membrane. It carries out the reaction L-cysteinyl-[protein] + hexadecanoyl-CoA = S-hexadecanoyl-L-cysteinyl-[protein] + CoA. Its function is as follows. S-acyltransferase involved in protein lipid modification. The protein is Protein S-acyltransferase 18 (PAT18) of Arabidopsis thaliana (Mouse-ear cress).